Consider the following 101-residue polypeptide: Small ribosomal subunit protein uS14 (101 aa).

The protein belongs to the universal ribosomal protein uS14 family. In terms of assembly, part of the 30S ribosomal subunit. Contacts proteins S3 and S10.

Its function is as follows. Binds 16S rRNA, required for the assembly of 30S particles and may also be responsible for determining the conformation of the 16S rRNA at the A site. In Neorickettsia sennetsu (strain ATCC VR-367 / Miyayama) (Ehrlichia sennetsu), this protein is Small ribosomal subunit protein uS14.